A 138-amino-acid chain; its full sequence is Transcription antitermination protein NusB (138 aa).

The protein belongs to the NusB family.

In terms of biological role, involved in transcription antitermination. Required for transcription of ribosomal RNA (rRNA) genes. Binds specifically to the boxA antiterminator sequence of the ribosomal RNA (rrn) operons. The protein is Transcription antitermination protein NusB of Yersinia pseudotuberculosis serotype O:1b (strain IP 31758).